Reading from the N-terminus, the 662-residue chain is Sodium/glucose cotransporter 1 (662 aa).

Over 1-24 the chain is Extracellular; that stretch reads MDSSTLSPLTTSTAAPLESYERIR. Residues 25 to 47 form a helical membrane-spanning segment; sequence NAADISVIVIYFLVVMAVGLWAM. The Cytoplasmic portion of the chain corresponds to 48-66; that stretch reads FSTNRGTVGGFFLAGRSMV. Residues 67–90 traverse the membrane as a helical segment; sequence WWPIGASLFASNIGSGHFVGLAGT. The Extracellular segment spans residues 91 to 95; the sequence is GAASG. Residues 96–117 form a helical membrane-spanning segment; that stretch reads IATGGFEWNALIMVVVLGWVFV. The Cytoplasmic segment spans residues 118–139; sequence PIYIRAGVVTMPEYLQKRFGGK. A helical membrane pass occupies residues 140–169; the sequence is RIQIYLSILSLLLYIFTKISADIFSGAIFI. Residues 170-176 lie on the Extracellular side of the membrane; it reads QLTLGLD. Residues 177–193 traverse the membrane as a helical segment; it reads IYVAIIILLVITGLYTI. Residues 194–202 are Cytoplasmic-facing; it reads TGGLAAVIY. The chain crosses the membrane as a helical span at residues 203–221; sequence TDTLQTAIMMVGSVILTGF. Residues 222-275 lie on the Extracellular side of the membrane; that stretch reads AFHEVGGYEAFTEKYMRAIPSQISYGNTSIPQKCYTPREDAFHIFRDAITGDIP. The N-linked (GlcNAc...) asparagine glycan is linked to asparagine 248. 5 cysteine pairs are disulfide-bonded: cysteine 255-cysteine 511, cysteine 255-cysteine 608, cysteine 345-cysteine 351, cysteine 355-cysteine 361, and cysteine 517-cysteine 522. Residues 276–295 form a helical membrane-spanning segment; the sequence is WPGLVFGMSILTLWYWCTDQ. At 296–309 the chain is on the cytoplasmic side; the sequence is VIVQRCLSAKNLSH. The chain crosses the membrane as a helical span at residues 310 to 331; that stretch reads VKAGCILCGYLKVMPMFLIVMM. Over 332 to 375 the chain is Extracellular; the sequence is GMVSRILYTDKVACVVPSECERYCGTRVGCTNIAFPTLVVELMP. Residues 376 to 406 form a helical membrane-spanning segment; the sequence is NGLRGLMLSVMMASLMSSLTSIFNSASTLFT. The Cytoplasmic segment spans residues 407 to 422; sequence MDIYTKIRKKASEKEL. A helical transmembrane segment spans residues 423 to 444; the sequence is MIAGRLFMLFLIGISIAWVPIV. Residues 445-451 lie on the Extracellular side of the membrane; the sequence is QSAQSGQ. Residues 452–477 form a helical membrane-spanning segment; sequence LFDYIQSITSYLGPPIAAVFLLAIFW. A D-glucose-binding site is contributed by glutamine 457. Topologically, residues 478–481 are cytoplasmic; the sequence is KRVN. Residues 482–504 form a helical membrane-spanning segment; it reads EPGAFWGLVLGFLIGISRMITEF. The Extracellular portion of the chain corresponds to 505–525; it reads AYGTGSCMEPSNCPTIICGVH. Residues 526 to 547 form a helical membrane-spanning segment; sequence YLYFAIILFVISIITVVVVSLF. The Cytoplasmic portion of the chain corresponds to 548 to 642; sequence TKPIPDVHLY…TSEHPLWRTV (95 aa). The helical transmembrane segment at 643-660 threads the bilayer; that stretch reads VNINGVILLAVAVFCYAY. The Extracellular portion of the chain corresponds to 661 to 662; it reads FA.

This sequence belongs to the sodium:solute symporter (SSF) (TC 2.A.21) family. N-glycosylation is not necessary for the cotransporter function. As to expression, found predominantly in intestine, renal cortex and in outer renal medulla.

It is found in the apical cell membrane. It carries out the reaction D-glucose(out) + 2 Na(+)(out) = D-glucose(in) + 2 Na(+)(in). The enzyme catalyses D-galactose(out) + 2 Na(+)(out) = D-galactose(in) + 2 Na(+)(in). Enhanced by the interaction with PDZK1IP1/MAP17; but unlike SLC5A2/SGLT2, PDZK1IP1 is not essential for SLC5A1 transporter activity. Possibly modulated by cholesterol binding. Electrogenic Na(+)-coupled sugar symporter that actively transports D-glucose or D-galactose at the plasma membrane, with a Na(+) to sugar coupling ratio of 2:1. Transporter activity is driven by a transmembrane Na(+) electrochemical gradient set by the Na(+)/K(+) pump. Has a primary role in the transport of dietary monosaccharides from enterocytes to blood. Responsible for the absorption of D-glucose or D-galactose across the apical brush-border membrane of enterocytes, whereas basolateral exit is provided by GLUT2. Additionally, functions as a D-glucose sensor in enteroendocrine cells, triggering the secretion of the incretins GCG and GIP that control food intake and energy homeostasis. Together with SGLT2, functions in reabsorption of D-glucose from glomerular filtrate, playing a nonredundant role in the S3 segment of the proximal tubules. Transports D-glucose into endometrial epithelial cells, controlling glycogen synthesis and nutritional support for the embryo as well as the decidual transformation of endometrium prior to conception. Acts as a water channel enabling passive water transport in response to the osmotic gradient created upon sugar and Na(+) uptake. Has high water conductivity comparable to aquaporins and therefore is expected to play an important role in transepithelial water permeability, especially in the small intestine. The polypeptide is Sodium/glucose cotransporter 1 (SLC5A1) (Oryctolagus cuniculus (Rabbit)).